A 925-amino-acid chain; its full sequence is Aspulvinone E synthetase melA (925 aa).

The tract at residues 11–434 (ETAAARNGDG…GGRAKETIII (424 aa)) is adenylation (A) domain. Positions 564 to 644 (SPKNDFEKGL…ELAAALDNLY (81 aa)) constitute a Carrier domain. An O-(pantetheine 4'-phosphoryl)serine modification is found at Ser601. The thioesterase (TE) domain stretch occupies residues 663 to 923 (PLWLVHPGAG…KILRSALAER (261 aa)).

The protein belongs to the NRP synthetase family.

It localises to the cytoplasm. The enzyme catalyses 2 3-(4-hydroxyphenyl)pyruvate + AH2 + 2 ATP + O2 = aspulvinone E + A + 2 AMP + CO2 + 2 diphosphate + H2O + H(+). In terms of biological role, nonribosomal peptide synthase; part of the gene cluster that mediates the biosynthesis of Asp-melanin, a pigment that confers resistance against UV light and hampers phagocytosis by soil amoeba. The nonribosomal peptide synthase melA converts 4-hydroxyphenylpyruvate (4-HPPA) to aspulvinone E. The tyrosinase tyrP then performs hydroxylations of both aromatic moieties of aspulvinone E. The product of tyrP is highly unstable, and, due to the high reactivity of methides and ortho-diquinones, the polymeric Asp-melanin forms spontaneously. The protein is Aspulvinone E synthetase melA of Aspergillus terreus (strain NIH 2624 / FGSC A1156).